We begin with the raw amino-acid sequence, 388 residues long: Deoxyguanosinetriphosphate triphosphohydrolase-like protein (388 aa).

Positions 24 to 44 are disordered; the sequence is HSAQTRGRVHAEPPSTSRTEF. In terms of domain architecture, HD spans 78 to 209; that stretch reads RLTHSLEVAQ…ANLADEVAYN (132 aa).

It belongs to the dGTPase family. Type 2 subfamily.

This Ralstonia pickettii (strain 12J) protein is Deoxyguanosinetriphosphate triphosphohydrolase-like protein.